Consider the following 61-residue polypeptide: uncharacterized protein (61 aa).

It localises to the mitochondrion. This is an uncharacterized protein from Marchantia polymorpha (Common liverwort).